The sequence spans 285 residues: sn-2 palmitoyl-lipid 9-desaturase (285 aa).

A run of 2 helical transmembrane segments spans residues 20–40 (WINV…PWFF) and 44–64 (ALGL…CLGY). The short motif at 65 to 70 (HRLLSH) is the Histidine box-1 element. A helical transmembrane segment spans residues 81 to 101 (YAIALIGALALQGGPIFWVGG). A Histidine box-2 motif is present at residues 102-106 (HRQHH). The helical transmembrane segment at 169-189 (IPFALLLYVLGGWPFVFYGVF) threads the bilayer. Positions 239-243 (HHTYP) match the Histidine box-3 motif.

Belongs to the fatty acid desaturase type 2 family. Fe(2+) serves as cofactor.

It is found in the membrane. The catalysed reaction is a 1-acyl-2-hexadecanoyl-glycerolipid + 2 reduced [2Fe-2S]-[ferredoxin] + O2 + 2 H(+) = a 1-acyl-2-[(9Z)-hexadecenoyl]-glycerolipid + 2 oxidized [2Fe-2S]-[ferredoxin] + 2 H2O. The protein operates within lipid metabolism; fatty acid biosynthesis. Desaturase involved in fatty acid biosynthesis. Introduces a double bond at carbon 9 of palmitoyl groups (16:0) attached to the sn-2 position of the glycerol moiety of membrane glycerolipids. The sequence is that of sn-2 palmitoyl-lipid 9-desaturase from Nostoc sp. (strain 36).